A 142-amino-acid chain; its full sequence is Hemoglobin subunit zeta (142 aa).

Ser2 carries the post-translational modification N-acetylserine. Residues 2 to 142 (SLTKAERTMV…VSSVLTEKYR (141 aa)) enclose the Globin domain. Ser53 is subject to Phosphoserine. His59 serves as a coordination point for heme b. Position 73 is a phosphoserine (Ser73). Heme b is bound at residue His88.

Belongs to the globin family. In terms of assembly, heterotetramer of two zeta chains and beta-type chains.

In terms of biological role, the zeta chain is an alpha-type chain of mammalian embryonic hemoglobin. The chain is Hemoglobin subunit zeta (HBZ1) from Equus caballus (Horse).